Reading from the N-terminus, the 237-residue chain is MTPAEIAPKDRLIVALDLPSVDAAEAMIARLGDSVTFYKIGYRLAYAGGLPLVARLADKGKKVFLDLKLHDIGNTVAQGVESITRLGATFLTVHAYPQTMKGAVEGRGGSNLKILAVTVLTSYNEDDLHAAGFRLGVAELVEARAQQAQVLGIDGLVSSPEEVGALRKIVGHQMSLVTPGIRPAGSASGDQKRIMTPGRAITAGADYLVVGRPVVEAAEPKAIADAIQAEIGQALGA.

Residues Asp-17, Lys-39, 66–75 (DLKLHDIGNT), Thr-121, Arg-182, Gln-191, Gly-211, and Arg-212 contribute to the substrate site. Catalysis depends on Lys-68, which acts as the Proton donor.

It belongs to the OMP decarboxylase family. Type 1 subfamily. In terms of assembly, homodimer.

It catalyses the reaction orotidine 5'-phosphate + H(+) = UMP + CO2. It participates in pyrimidine metabolism; UMP biosynthesis via de novo pathway; UMP from orotate: step 2/2. Catalyzes the decarboxylation of orotidine 5'-monophosphate (OMP) to uridine 5'-monophosphate (UMP). The chain is Orotidine 5'-phosphate decarboxylase from Bradyrhizobium diazoefficiens (strain JCM 10833 / BCRC 13528 / IAM 13628 / NBRC 14792 / USDA 110).